A 677-amino-acid polypeptide reads, in one-letter code: Pro-neuregulin-1, membrane-bound isoform (677 aa).

Residues 1 to 12 are compositionally biased toward basic and acidic residues; the sequence is MAEKKKVKEGKG. Disordered stretches follow at residues 1–43 and 78–106; these read MAEK…KEIK and GAKN…ISKA. At 1-260 the chain is on the extracellular side; that stretch reads MAEKKKVKEG…MEAEELYQKR (260 aa). Residues 13-24 show a composition bias toward basic residues; sequence RKGKGKKDRKGK. One can recognise an Ig-like C2-type domain in the interval 37 to 132; that stretch reads PKLKEIKTQS…GNDTVTVNVT (96 aa). Cys-57 and Cys-116 are joined by a disulfide. A compositionally biased stretch (basic and acidic residues) spans 78–91; it reads GAKNKPDSKPEHIK. Asn-124 and Asn-130 each carry an N-linked (GlcNAc...) asparagine glycan. Residues 188 to 232 form the EGF-like domain; the sequence is HLIKCSDKEKTYCVNGGECYVLNGITSSNQFMCKCKPGFTGARCT. 3 disulfide bridges follow: Cys-192–Cys-206, Cys-200–Cys-220, and Cys-222–Cys-231. Residues 261–280 traverse the membrane as a helical segment; that stretch reads VLTITGICIDLLVVGDMCVV. The Cytoplasmic segment spans residues 281-677; the sequence is DAYCKTKKQR…RKMTCKTLFI (397 aa). Residues 294-315 show a composition bias toward basic and acidic residues; it reads NDRLRQSLRERNKNITNKDNRP. Disordered stretches follow at residues 294 to 326, 350 to 375, 397 to 418, 457 to 479, and 503 to 617; these read NDRL…PRKN, ETSF…PSHS, SVEN…GIGG, VEFK…ESSL, and PPRL…FLSI. A compositionally biased stretch (low complexity) spans 351–375; the sequence is TSFSTSHYTSTTHHSTTVTQTPSHS. The segment covering 397–407 has biased composition (polar residues); sequence SVENSRHTSPT. The span at 505–515 shows a compositional bias: basic and acidic residues; the sequence is RLREKRYDRKT. Positions 568 to 578 are enriched in basic residues; the sequence is VNSRRQKRTKP. Low complexity predominate over residues 591-600; sequence DSSSESSTSE.

Belongs to the neuregulin family. Proteolytic cleavage close to the plasma membrane on the external face leads to the release of the soluble growth factor form. Post-translationally, extensive glycosylation precedes the proteolytic cleavage. Isoform alpha1 is expressed in brain and muscle. Isoform CRD is expressed in brain and spinal cord, but at very low level in muscle.

The protein localises to the cell membrane. It localises to the secreted. Direct ligand for the ERBB tyrosine kinase receptors. Induces expression of acetylcholine receptor in synaptic nuclei. The polypeptide is Pro-neuregulin-1, membrane-bound isoform (nrg1) (Xenopus laevis (African clawed frog)).